The primary structure comprises 505 residues: Cyanidin 3-O-glucoside 7-O-glucosyltransferase (acyl-glucose) (505 aa).

Residues 1 to 25 (MCPSFLVTLLLLQLSSLVVVLVVWA) form the signal peptide. A beta-D-glucoside contacts are provided by residues Gln52, His152, and 197 to 198 (NE). Glu198 acts as the Proton donor in catalysis. Residues Cys217 and Cys225 are joined by a disulfide bond. Asn224, Asn229, and Asn324 each carry an N-linked (GlcNAc...) asparagine glycan. Positions 341 and 403 each coordinate a beta-D-glucoside. Glu403 (nucleophile) is an active-site residue. 2 N-linked (GlcNAc...) asparagine glycosylation sites follow: Asn411 and Asn437. Positions 447 and 463 each coordinate a beta-D-glucoside. The N-linked (GlcNAc...) asparagine glycan is linked to Asn494.

Belongs to the glycosyl hydrolase 1 family.

It is found in the vacuole. The catalysed reaction is 1-O-(4-hydroxy-3-methoxybenzoyl)-beta-D-glucose + cyanidin 3-O-beta-D-glucoside = cyanidin 3,7-di-O-beta-D-glucoside + vanillate. It participates in pigment biosynthesis; anthocyanin biosynthesis. Its function is as follows. Beta-glycosidase that catalyzes the transfer of glucose moiety to anthocyanidin 3-glucoside at the 7 position. Anthocyanins are ubiquitous colored pigments that are responsible for variations in petal color. The sequence is that of Cyanidin 3-O-glucoside 7-O-glucosyltransferase (acyl-glucose) (AA7GT) from Delphinium grandiflorum (Siberian larkspur).